The sequence spans 203 residues: Secreted phosphoprotein 24 (203 aa).

Residues M1–G23 form the signal peptide. 2 disulfide bridges follow: C86-C96 and C109-C127. The residue at position 90 (S90) is a Phosphoserine. Phosphoserine is present on residues S137, S138, S162, S165, and S174.

This sequence belongs to the SPP2 family. In terms of processing, phosphorylation sites are present in the extracellular medium.

The protein localises to the secreted. Functionally, could coordinate an aspect of bone turnover. In Mus musculus (Mouse), this protein is Secreted phosphoprotein 24 (Spp2).